Reading from the N-terminus, the 493-residue chain is Glutamate--tRNA ligase (493 aa).

Residues 10 to 20 (PSPTGDPHVGT) carry the 'HIGH' region motif. Positions 251–255 (KLSKR) match the 'KMSKS' region motif. Position 254 (K254) interacts with ATP.

Belongs to the class-I aminoacyl-tRNA synthetase family. Glutamate--tRNA ligase type 1 subfamily. As to quaternary structure, monomer.

It is found in the cytoplasm. It catalyses the reaction tRNA(Glu) + L-glutamate + ATP = L-glutamyl-tRNA(Glu) + AMP + diphosphate. Catalyzes the attachment of glutamate to tRNA(Glu) in a two-step reaction: glutamate is first activated by ATP to form Glu-AMP and then transferred to the acceptor end of tRNA(Glu). In Pseudomonas entomophila (strain L48), this protein is Glutamate--tRNA ligase.